Consider the following 481-residue polypeptide: uncharacterized protein (481 aa).

Residues F18–F38 form a helical membrane-spanning segment.

Its subcellular location is the cell inner membrane. Functionally, involved in DNA conjugation in the recipient strain. This is an uncharacterized protein from Mycolicibacterium smegmatis (strain MKD8) (Mycobacterium smegmatis).